The chain runs to 981 residues: Translation initiation factor IF-2 (981 aa).

Residues 31 to 370 are disordered; it reads FVKSASSTVE…SKRAKRAEYE (340 aa). Positions 64-87 are enriched in low complexity; that stretch reads GAAAPAARPAAKPGAPSPSAAKPG. A compositionally biased stretch (pro residues) spans 88–111; it reads GPRPGPKPAAPAPAAPAAPAPAAP. Positions 112-121 are enriched in low complexity; sequence AAPAAAAPAA. Pro residues predominate over residues 136–145; the sequence is PAQPARPAPA. Residues 146 to 165 show a composition bias toward low complexity; the sequence is APAASAPAAPAAPAAPSTGA. Residues 256-269 are compositionally biased toward pro residues; sequence RPSPGSMPPRPNPG. Over residues 270–279 the composition is skewed to low complexity; it reads AMPARSARPA. The segment covering 280–339 has biased composition (gly residues); that stretch reads PGGGGRPGRPGGAPGGRPGGGGGGYRGGGAPGAGAGAGAPGGAAPAGGFRGRPGGGGRPG. The span at 356–365 shows a compositional bias: basic residues; the sequence is RRGRKSKRAK. Residues 477 to 649 enclose the tr-type G domain; sequence SRPPVVTVMG…VLLTADASLD (173 aa). Residues 486-493 are G1; sequence GHVDHGKT. 486–493 lines the GTP pocket; the sequence is GHVDHGKT. The segment at 511 to 515 is G2; the sequence is GITQH. Residues 536–539 are G3; the sequence is DTPG. GTP is bound by residues 536–540 and 590–593; these read DTPGH and NKID. Positions 590–593 are G4; the sequence is NKID. Residues 626-628 are G5; that stretch reads SAK.

Belongs to the TRAFAC class translation factor GTPase superfamily. Classic translation factor GTPase family. IF-2 subfamily.

The protein resides in the cytoplasm. One of the essential components for the initiation of protein synthesis. Protects formylmethionyl-tRNA from spontaneous hydrolysis and promotes its binding to the 30S ribosomal subunits. Also involved in the hydrolysis of GTP during the formation of the 70S ribosomal complex. This chain is Translation initiation factor IF-2, found in Rhodococcus erythropolis (strain PR4 / NBRC 100887).